The sequence spans 269 residues: Magnetosome protein MamX (269 aa).

Over 1 to 10 the chain is Cytoplasmic; sequence MNTKAVAHPD. A helical transmembrane segment spans residues 11–31; sequence IAVWIMALGIAFSMALVLTAL. Residues 32–269 lie on the Lumenal side of the membrane; the sequence is FNANPWEDHT…NVGGVDAEER (238 aa). The MCR (magnetochrome) 1 motif lies at 48–71; it reads IVAGMAAPHRDGREKMVCSSCHIV. Residues Cys-65, Cys-68, His-69, Cys-104, Cys-107, and His-108 each coordinate heme. Positions 87 to 110 match the MCR 2 motif; that stretch reads IVEGTPAPHVDGREKMACASCHTI.

It belongs to the magnetosome MamX family. As to quaternary structure, probably interacts with FtsZ-like and MamY proteins. It depends on heme as a cofactor.

It localises to the magnetosome membrane. In terms of biological role, required for correct biomineralization of the magnetosome, maybe via redox control. May function with MamY, MamZ amd Mms6 in biomineralization. This is Magnetosome protein MamX from Magnetospirillum gryphiswaldense (strain DSM 6361 / JCM 21280 / NBRC 15271 / MSR-1).